We begin with the raw amino-acid sequence, 206 residues long: Fibroblast growth factor 4 (206 aa).

A signal peptide spans 1–29 (MAGPGTAAAALLPAVLLAVLAPWAGRGGA).

Belongs to the heparin-binding growth factors family. In terms of assembly, interacts with FGFR1, FGFR2, FGFR3 and FGFR4. Affinity between fibroblast growth factors (FGFs) and their receptors is increased by heparan sulfate glycosaminoglycans that function as coreceptors.

The protein localises to the secreted. Its function is as follows. Plays an important role in the regulation of embryonic development, cell proliferation, and cell differentiation. Required for normal limb and cardiac valve development during embryogenesis. May play a role in embryonic molar tooth bud development via inducing the expression of MSX1, MSX2 and MSX1-mediated expression of SDC1 in dental mesenchyme cells. The protein is Fibroblast growth factor 4 of Bos taurus (Bovine).